A 305-amino-acid chain; its full sequence is NK1 transcription factor-related protein 2 (305 aa).

2 disordered regions span residues 51–158 (EEVE…KPRR) and 210–257 (KWKK…PGAL). Residues 87–96 (SEAEEEEEAE) show a composition bias toward acidic residues. The segment covering 97–115 (DAGRAHQPERWQGVHEGSP) has biased composition (basic and acidic residues). The segment covering 129-140 (AEGLPASPGSPG) has biased composition (low complexity). Residues 156 to 215 (PRRARTAFTYEQLVALENKFRATRYLSVCERLNLALSLSLTETQVKIWFQNRRTKWKKQN) constitute a DNA-binding region (homeobox).

This sequence belongs to the NK-1 homeobox family. Interacts (via the homeodomain) with HIPK1, HIPK2, and HIPK3. Post-translationally, phosphorylated by HIPK2 in vitro. In terms of tissue distribution, expression detected in the brain, testis and spleen. In the testis, expressed in the germ cells of the seminiferous epithelium, predominantly in elongating spermatids and spermatozoa. Expressed throughout the brain with highest levels in regions of the cerebral cortex, hippocampus, diencephalon, pons, medulla and cerebellum.

The protein localises to the nucleus. Its subcellular location is the nucleolus. In terms of biological role, transcriptional repressor. May play a role in early development as a Wnt/beta-catenin effector, hence controlling pluripotency and preimplantation development of embryonic stem cells. May promote adipogenesis in mesenchymal stem cells, possibly by inhibiting the expression of the antiadipogenic factor NR2F2. May inhibit osteoblastogenic differentiation. The protein is NK1 transcription factor-related protein 2 (Nkx1-2) of Mus musculus (Mouse).